The chain runs to 262 residues: Membrane protein US15 (262 aa).

7 consecutive transmembrane segments (helical) span residues 46–66 (GAVG…CYAA), 77–97 (CLTE…VIFI), 108–128 (IGVL…ICLC), 133–153 (LVIS…GVAL), 163–183 (QIVV…VVIL), 186–206 (GWSW…CLAV), and 226–246 (LLAA…VLRI).

It belongs to the HHV-5 US12 protein family.

It localises to the host membrane. This is Membrane protein US15 (US15) from Human cytomegalovirus (strain Merlin) (HHV-5).